The chain runs to 233 residues: Zinc import ATP-binding protein ZnuC (233 aa).

In terms of domain architecture, ABC transporter spans 6 to 222; it reads IEFHNVSKKF…SDFSNALSSL (217 aa). Position 38 to 45 (38 to 45) interacts with ATP; that stretch reads GPNGAGKT.

This sequence belongs to the ABC transporter superfamily. Zinc importer (TC 3.A.1.15.5) family. As to quaternary structure, the complex is composed of two ATP-binding proteins (ZnuC), two transmembrane proteins (ZnuB) and a solute-binding protein (ZnuA).

It localises to the cell inner membrane. The enzyme catalyses Zn(2+)(out) + ATP(in) + H2O(in) = Zn(2+)(in) + ADP(in) + phosphate(in) + H(+)(in). Functionally, part of the ABC transporter complex ZnuABC involved in zinc import. Responsible for energy coupling to the transport system. The chain is Zinc import ATP-binding protein ZnuC from Rickettsia bellii (strain RML369-C).